A 507-amino-acid chain; its full sequence is MVTIRADEISNIIRERIQHYTKKINILNTGTVLQVGDGIVRIYGLDEVMAGELIEFEEGTKGIALNLESKNVGVVLMGDGLRIKEGGSVKATGRIAQVPVGDAYLGRVINALATPIDGRGEILSSEFRLIDSPAPGILSRRSIYEPLQTGLIAIDSMIPIGRGQRELIIGDRQTGKTAVATDTILNQQSQNIICVYVAIGQKASSVAQVVTTLQEKGALQYTIVVAEMADSAATLQYLAPYTGAALAEYFMYKERHTLIIYDDLSKQAQAYRQMSLLLRRPPGREAYPGDVFYLHSRLLERAAKLSSKLGEGSMTALPIVETQSGDVSAYIPTNVISITDGQIFLSADLFNAGLRPAINVGISVSRVGSAAQIKAMKQVASKLKLELAQFAELEAFAQFASDLDQASQNLLARGQRLRELLKQSQSAPLTTAEQIMSIYAGINGYLDSLELGQIGKFLRELSDYLKVNKPRFQEIINSTKTFTEEAEAILKDTIPSEKDRFLREGKI.

Position 170–177 (170–177 (GDRQTGKT)) interacts with ATP.

The protein belongs to the ATPase alpha/beta chains family. As to quaternary structure, F-type ATPases have 2 components, CF(1) - the catalytic core - and CF(0) - the membrane proton channel. CF(1) has five subunits: alpha(3), beta(3), gamma(1), delta(1), epsilon(1). CF(0) has four main subunits: a, b, b' and c.

Its subcellular location is the plastid membrane. It catalyses the reaction ATP + H2O + 4 H(+)(in) = ADP + phosphate + 5 H(+)(out). Its function is as follows. Produces ATP from ADP in the presence of a proton gradient across the membrane. The alpha chain is a regulatory subunit. The chain is ATP synthase subunit alpha, plastid from Cuscuta obtusiflora (Peruvian dodder).